The primary structure comprises 331 residues: tRNA N6-adenosine threonylcarbamoyltransferase (331 aa).

3 residues coordinate Fe cation: H109, H113, and Y130. Substrate is bound by residues 130–134 (YLSGG), D162, D183, and S262. A Fe cation-binding site is contributed by D290.

It belongs to the KAE1 / TsaD family. It depends on Fe(2+) as a cofactor.

It is found in the cytoplasm. It catalyses the reaction L-threonylcarbamoyladenylate + adenosine(37) in tRNA = N(6)-L-threonylcarbamoyladenosine(37) in tRNA + AMP + H(+). Its function is as follows. Required for the formation of a threonylcarbamoyl group on adenosine at position 37 (t(6)A37) in tRNAs that read codons beginning with adenine. Is probably involved in the transfer of the threonylcarbamoyl moiety of threonylcarbamoyl-AMP (TC-AMP) to the N6 group of A37. This is tRNA N6-adenosine threonylcarbamoyltransferase from Saccharolobus islandicus (strain M.16.27) (Sulfolobus islandicus).